Here is a 541-residue protein sequence, read N- to C-terminus: 2-hydroxyacylsphingosine 1-beta-galactosyltransferase (541 aa).

Positions Met-1–Ala-20 are cleaved as a signal peptide. Residues Asn-78, Asn-333, and Asn-442 are each glycosylated (N-linked (GlcNAc...) asparagine). The helical transmembrane segment at Tyr-472–Leu-492 threads the bilayer.

Belongs to the UDP-glycosyltransferase family.

The protein localises to the membrane. Its subcellular location is the endoplasmic reticulum. It catalyses the reaction an N-acylsphing-4-enine + UDP-alpha-D-galactose = a beta-D-galactosyl-(1&lt;-&gt;1')-N-acylsphing-4-enine + UDP + H(+). The enzyme catalyses an N-acyl-sphingoid base + UDP-alpha-D-galactose = a D-galactosylceramide + UDP + H(+). The catalysed reaction is N-(2-hydroxy-hexanoyl)-sphing-4-enine + UDP-alpha-D-galactose = N-(2-hydroxy-hexanoyl)-beta-D-galactosyl-sphing-4-enine + UDP + H(+). It carries out the reaction N-(2-hydroxy-hexanoyl)-sphinganine + UDP-alpha-D-galactose = N-(2-hydroxyhexanoyl)-beta-D-galactosylsphinganine + UDP + H(+). Its pathway is sphingolipid metabolism; galactosylceramide biosynthesis. In terms of biological role, catalyzes the transfer of galactose to ceramide, a key enzymatic step in the biosynthesis of galactocerebrosides, which are abundant sphingolipids of the myelin membrane of the central nervous system and peripheral nervous system. Galactosylates both hydroxy- and non-hydroxy fatty acid-containing ceramides and diglycerides. This chain is 2-hydroxyacylsphingosine 1-beta-galactosyltransferase, found in Homo sapiens (Human).